A 1816-amino-acid chain; its full sequence is Kinesin-like protein KIF1B (1816 aa).

Serine 2 is modified (N-acetylserine). In terms of domain architecture, Kinesin motor spans serine 5–isoleucine 354. Glycine 97–serine 104 contacts ATP. An interaction with KIFBP region spans residues asparagine 270 to arginine 350. The interval phenylalanine 431–serine 450 is disordered. Residues serine 432–serine 450 are compositionally biased toward low complexity. Residues glycine 470 to methionine 512 are a coiled coil. The region spanning threonine 556–valine 612 is the FHA domain. Phosphothreonine occurs at positions 647 and 652. Positions isoleucine 672–glutamate 731 form a coiled coil. 5 positions are modified to phosphoserine: serine 1054, serine 1057, serine 1416, serine 1454, and serine 1487. The disordered stretch occupies residues serine 1550–aspartate 1570. Phosphoserine is present on residues serine 1573, serine 1603, serine 1610, and serine 1613. Over residues serine 1620–serine 1637 the composition is skewed to low complexity. Residues serine 1620–serine 1659 form a disordered region. Over residues aspartate 1640–serine 1659 the composition is skewed to polar residues. Residues valine 1701 to alanine 1799 enclose the PH domain.

This sequence belongs to the TRAFAC class myosin-kinesin ATPase superfamily. Kinesin family. Unc-104 subfamily. Monomer. Interacts with KIFBP; positively regulates KIF1B microtubule motor activity. Interacts (via C-terminus end of the kinesin-motor domain) with CHP1; the interaction occurs in a calcium-dependent manner. Interacts with MADD (via death domain); links this isoform of KIF1B to Rab3-carrying vesicles in anterograde synaptic vesicle transport. In terms of tissue distribution, expressed in the brain with lower expression in testis and liver (at protein level). Strongly expressed in the brain and ovary, with lower expression in lung, kidney, uterus, testis and liver. As to expression, isoform 2 is expressed in non-neuronal tissues.

The protein resides in the cytoplasm. Its subcellular location is the cytoskeleton. The protein localises to the cytoplasmic vesicle. It localises to the secretory vesicle. It is found in the synaptic vesicle membrane. The protein resides in the lysosome. The enzyme catalyses ATP + H2O + a kinesin associated with a microtubule at position (n) = ADP + phosphate a kinesin associated with a microtubule at position (n+1, toward the plus end).. In terms of biological role, has a plus-end-directed microtubule motor activity and functions as a motor for transport of vesicles and organelles along microtubules. Has a plus-end-directed microtubule motor activity and functions as a motor for anterograde synaptic vesicle transport along axonal microtubules from the cell body to the presynapse in neuronal cells. Functionally, has a plus-end-directed microtubule motor activity and functions as a motor for the translocation of lysosomes from perinuclear regions to the cell periphery. The polypeptide is Kinesin-like protein KIF1B (Rattus norvegicus (Rat)).